The primary structure comprises 444 residues: Acyl-CoA 6-desaturase (444 aa).

Residues 1-122 (MGKGGNQDEG…FRALRKTAED (122 aa)) lie on the Cytoplasmic side of the membrane. In terms of domain architecture, Cytochrome b5 heme-binding spans 18–95 (MPTFRWEEIQ…MKPLLIGELA (78 aa)). Residues 123 to 143 (MNLFKSNQLFFLLHLAHIIAM) traverse the membrane as a helical segment. The Lumenal segment spans residues 144 to 147 (ESIA). A helical transmembrane segment spans residues 148–168 (WFTLFYFGNGWIPTIITAFVL). The Cytoplasmic segment spans residues 169 to 264 (ATSQAQAGWL…KYLPYNHQHE (96 aa)). Residues 180-184 (HDYGH) carry the Histidine box-1 motif. A Histidine box-2 motif is present at residues 217-221 (HFQHH). Residues 265 to 285 (YFFLIGPPLLIPLYFQYQIIM) form a helical membrane-spanning segment. Residues 286–305 (TMIVRKYWADLAWAISYYTR) lie on the Lumenal side of the membrane. Residues 306–326 (FFITYIPFYGVLGSILFLNFI) form a helical membrane-spanning segment. The Cytoplasmic portion of the chain corresponds to 327–444 (RFLESHWFVW…QLWLDAYLHK (118 aa)). Positions 382 to 386 (QIEHH) match the Histidine box-3 motif.

This sequence belongs to the fatty acid desaturase type 1 family.

Its subcellular location is the endoplasmic reticulum membrane. It carries out the reaction (9Z,12Z)-octadecadienoyl-CoA + 2 Fe(II)-[cytochrome b5] + O2 + 2 H(+) = (6Z,9Z,12Z)-octadecatrienoyl-CoA + 2 Fe(III)-[cytochrome b5] + 2 H2O. The catalysed reaction is (9Z,12Z,15Z)-octadecatrienoyl-CoA + 2 Fe(II)-[cytochrome b5] + O2 + 2 H(+) = (6Z,9Z,12Z,15Z)-octadecatetraenoyl-CoA + 2 Fe(III)-[cytochrome b5] + 2 H2O. The enzyme catalyses (9Z,12Z,15Z,18Z,21Z)-tetracosapentaenoyl-CoA + 2 Fe(II)-[cytochrome b5] + O2 + 2 H(+) = (6Z,9Z,12Z,15Z,18Z,21Z)-tetracosahexaenoyl-CoA + 2 Fe(III)-[cytochrome b5] + 2 H2O. It catalyses the reaction (11E)-octadecenoyl-CoA + 2 Fe(II)-[cytochrome b5] + O2 + 2 H(+) = (6Z,11E)-octadecadienoyl-CoA + 2 Fe(III)-[cytochrome b5] + 2 H2O. It carries out the reaction (11Z,14Z)-eicosadienoyl-CoA + 2 Fe(II)-[cytochrome b5] + O2 + 2 H(+) = (8Z,11Z,14Z)-eicosatrienoyl-CoA + 2 Fe(III)-[cytochrome b5] + 2 H2O. The catalysed reaction is (11Z,14Z,17Z)-eicosatrienoyl-CoA + 2 Fe(II)-[cytochrome b5] + O2 + 2 H(+) = (8Z,11Z,14Z,17Z)-eicosatetraenoyl-CoA + 2 Fe(III)-[cytochrome b5] + 2 H2O. It participates in lipid metabolism; polyunsaturated fatty acid biosynthesis. Functionally, involved in the biosynthesis of highly unsaturated fatty acids (HUFA) from the essential polyunsaturated fatty acids (PUFA) linoleic acid (LA) (18:2n-6) and alpha-linolenic acid (ALA) (18:3n-3) precursors, acting as a fatty acyl-coenzyme A (CoA) desaturase that introduces a cis double bond at carbon 6 of the fatty acyl chain. Catalyzes the first and rate limiting step in this pathway which is the desaturation of LA (18:2n-6) and ALA (18:3n-3) into gamma-linoleate (GLA) (18:3n-6) and stearidonate (18:4n-3), respectively. Subsequently, in the biosynthetic pathway of HUFA n-3 series, it desaturates tetracosapentaenoate (24:5n-3) to tetracosahexaenoate (24:6n-3), which is then converted to docosahexaenoate (DHA)(22:6n-3), an important lipid for nervous system function. It can also desaturate (11E)-octadecenoate (trans-vaccenoate, a metabolite in the biohydrogenation pathway of LA and the predominant trans fatty acid in cow milk) at carbon 6 generating (6Z,11E)-octadecadienoate. In addition to Delta-6 activity, this enzyme exhibits Delta-8 activity with slight biases toward n-3 fatty acyl-CoA substrates. The sequence is that of Acyl-CoA 6-desaturase (FADS2) from Bos taurus (Bovine).